A 376-amino-acid polypeptide reads, in one-letter code: Arsenite methyltransferase (376 aa).

Phosphoserine occurs at positions 47 and 336. Basic and acidic residues predominate over residues 354–363 (SDKMKPRHAP). The interval 354–376 (SDKMKPRHAPEGTGGCCGKRKNC) is disordered.

This sequence belongs to the methyltransferase superfamily. Arsenite methyltransferase family.

Its subcellular location is the cytoplasm. It is found in the cytosol. It catalyses the reaction arsenic triglutathione + [thioredoxin]-dithiol + S-adenosyl-L-methionine + 2 H2O = methylarsonous acid + [thioredoxin]-disulfide + 3 glutathione + S-adenosyl-L-homocysteine + H(+). It carries out the reaction arsenic triglutathione + 2 [thioredoxin]-dithiol + 2 S-adenosyl-L-methionine + H2O = dimethylarsinous acid + 2 [thioredoxin]-disulfide + 3 glutathione + 2 S-adenosyl-L-homocysteine + 2 H(+). The enzyme catalyses arsenic triglutathione + 3 [thioredoxin]-dithiol + 3 S-adenosyl-L-methionine = trimethylarsine + 3 [thioredoxin]-disulfide + 3 glutathione + 3 S-adenosyl-L-homocysteine + 3 H(+). Catalyzes the transfer of a methyl group from AdoMet to trivalent arsenicals producing methylated and dimethylated arsenicals. It methylates arsenite to form methylarsonate, Me-AsO(3)H(2), which is reduced by methylarsonate reductase to methylarsonite, Me-As(OH)2. Methylarsonite is also a substrate and it is converted into the much less toxic compound dimethylarsinate (cacodylate), Me(2)As(O)-OH. This is Arsenite methyltransferase (As3mt) from Mus musculus (Mouse).